The sequence spans 57 residues: Small ribosomal subunit protein bS21 (57 aa).

It belongs to the bacterial ribosomal protein bS21 family.

The protein is Small ribosomal subunit protein bS21 of Bacillus anthracis (strain A0248).